The primary structure comprises 610 residues: MLKCIKHEYGIKNMKSIRNFSIIAHIDHGKSTLSDRLIQLCGGLSEREMSNQVLDSMDLEKERGITIKAQSVMIDYKNKSGNIFNLNFIDTPGHVDFSYEVSRSLAACEGALLVVDSTQGVEAQTLANCYTAIDMNVEIVPVLNKIDLPNSNADKVAKEIEDIIGIPALDAIRCSAKTGEGIEDLIERIINDIPYPKGSINSPLQALIIDSWFDNYLGVVSLIRIKNGILFERDKIQVMSTGKNYYVDQIGVFTPKKLNKNQLRCGEVGWIICGIKNIIAAPVGDTLTTAKNPAKNMIIGFKKIKPQIYAGLFPLTSDQYEMFRDALGKLSLNDASLFYEPENSVALGFGFRCGFLGVLHMEIIQARLEREYSIDLITTIPTVIYEIELINGKIIYLDTPSNFPNMNDIKIIKEPIVECSILSPPQFLGSIIKLCIKKRGVQINMVYHSHQVLLKYNIPMNEVILNFFDELKSVSSGYASLEYDFKYFQSVKMVRIDILINSEKVDALTILSYHKNAQSRSREIVDKMKKLIPRHQFDISIQAVINNSVIARSTIKQLRKNVLSKCYGGDVSRKKKLLQKQKDGKKRMKKIGNVNVPKTVFLSILNSRES.

A tr-type G domain is found at 15-197; that stretch reads KSIRNFSIIA…RIINDIPYPK (183 aa). Residues 27–32 and 144–147 contribute to the GTP site; these read DHGKST and NKID.

It belongs to the TRAFAC class translation factor GTPase superfamily. Classic translation factor GTPase family. LepA subfamily.

It is found in the cell membrane. The catalysed reaction is GTP + H2O = GDP + phosphate + H(+). Required for accurate and efficient protein synthesis under certain stress conditions. May act as a fidelity factor of the translation reaction, by catalyzing a one-codon backward translocation of tRNAs on improperly translocated ribosomes. Back-translocation proceeds from a post-translocation (POST) complex to a pre-translocation (PRE) complex, thus giving elongation factor G a second chance to translocate the tRNAs correctly. Binds to ribosomes in a GTP-dependent manner. This is Elongation factor 4 from Buchnera aphidicola subsp. Acyrthosiphon pisum (strain APS) (Acyrthosiphon pisum symbiotic bacterium).